We begin with the raw amino-acid sequence, 313 residues long: Peroxidase 57 (313 aa).

A signal peptide spans 1 to 22 (MMKGAKFSSLLVLFFIFPIAFA). Cystine bridges form between Cys33–Cys109, Cys66–Cys71, Cys115–Cys309, and Cys192–Cys224. His64 (proton acceptor) is an active-site residue. Ca(2+) contacts are provided by Asp65, Val68, Gly70, Asp72, and Ser74. Position 155 (Pro155) interacts with substrate. Residue His185 coordinates heme b. Position 186 (Thr186) interacts with Ca(2+). Positions 233, 236, and 241 each coordinate Ca(2+).

It belongs to the peroxidase family. Classical plant (class III) peroxidase subfamily. The cofactor is heme b. Ca(2+) is required as a cofactor. In terms of tissue distribution, mainly expressed in roots.

The protein localises to the secreted. It catalyses the reaction 2 a phenolic donor + H2O2 = 2 a phenolic radical donor + 2 H2O. Removal of H(2)O(2), oxidation of toxic reductants, biosynthesis and degradation of lignin, suberization, auxin catabolism, response to environmental stresses such as wounding, pathogen attack and oxidative stress. These functions might be dependent on each isozyme/isoform in each plant tissue. This is Peroxidase 57 (PER57) from Arabidopsis thaliana (Mouse-ear cress).